The chain runs to 187 residues: UPF0398 protein SAB1311c (187 aa).

The protein belongs to the UPF0398 family.

This Staphylococcus aureus (strain bovine RF122 / ET3-1) protein is UPF0398 protein SAB1311c.